A 504-amino-acid chain; its full sequence is ATP-dependent RNA helicase DBP3 (504 aa).

The segment covering 1 to 14 (MSKDELKDKKRKVE) has biased composition (basic and acidic residues). The segment at 1–65 (MSKDELKDKK…KSETESFAAS (65 aa)) is disordered. Residues 20–53 (SKKKLKKDKKDKKDKKDKKDKKDKKEKKEKKEKK) show a composition bias toward basic residues. The Q motif motif lies at 94-120 (LDFSQVSFIDQIQKEISKFPKPTPIQA). In terms of domain architecture, Helicase ATP-binding spans 123 to 296 (WPYLLAGKDV…SSFMSEPVKV (174 aa)). 136 to 143 (AETGSGKT) provides a ligand contact to ATP. The short motif at 243-246 (DEAD) is the DEAD box element. In terms of domain architecture, Helicase C-terminal spans 325 to 474 (KLLELLKKYH…PVPEELKKFG (150 aa)).

Belongs to the DEAD box helicase family. DDX5/DBP2 subfamily.

The protein resides in the nucleus. It is found in the nucleolus. It catalyses the reaction ATP + H2O = ADP + phosphate + H(+). Its function is as follows. ATP-dependent RNA helicase required for 60S ribosomal subunit synthesis. Involved in efficient pre-rRNA processing, predominantly at site A3, which is necessary for the normal formation of 25S and 5.8S rRNAs. This is ATP-dependent RNA helicase DBP3 (DBP3) from Kluyveromyces lactis (strain ATCC 8585 / CBS 2359 / DSM 70799 / NBRC 1267 / NRRL Y-1140 / WM37) (Yeast).